The following is a 269-amino-acid chain: Chymotrypsin-like elastase family member 2B (269 aa).

Residues 1–16 (MIRTLLLSTLVAGALS) form the signal peptide. The propeptide at 17–28 (CGVSTYAPDMSR) is activation peptide. A Peptidase S1 domain is found at 29-267 (MLGGEEARPN…YNDWINSVIA (239 aa)). An intrachain disulfide couples C58 to C74. Active-site charge relay system residues include H73 and D121. Disulfide bonds link C155–C222, C186–C202, and C212–C243. S216 serves as the catalytic Charge relay system.

The protein belongs to the peptidase S1 family. Elastase subfamily. As to expression, pancreas.

The protein localises to the secreted. It catalyses the reaction Preferential cleavage: Leu-|-Xaa, Met-|-Xaa and Phe-|-Xaa. Hydrolyzes elastin.. Acts upon elastin. The polypeptide is Chymotrypsin-like elastase family member 2B (CELA2B) (Homo sapiens (Human)).